Consider the following 872-residue polypeptide: DNA mismatch repair protein MutS (872 aa).

622 to 629 is an ATP binding site; it reads GPNMAGKS.

It belongs to the DNA mismatch repair MutS family.

This protein is involved in the repair of mismatches in DNA. It is possible that it carries out the mismatch recognition step. This protein has a weak ATPase activity. The protein is DNA mismatch repair protein MutS of Geobacter metallireducens (strain ATCC 53774 / DSM 7210 / GS-15).